A 227-amino-acid chain; its full sequence is Urease accessory protein UreF (227 aa).

The protein belongs to the UreF family. As to quaternary structure, ureD, UreF and UreG form a complex that acts as a GTP-hydrolysis-dependent molecular chaperone, activating the urease apoprotein by helping to assemble the nickel containing metallocenter of UreC. The UreE protein probably delivers the nickel.

It is found in the cytoplasm. In terms of biological role, required for maturation of urease via the functional incorporation of the urease nickel metallocenter. The polypeptide is Urease accessory protein UreF (Actinobacillus pleuropneumoniae serotype 3 (strain JL03)).